The following is a 370-amino-acid chain: Ribosomal RNA small subunit methyltransferase H (370 aa).

Residues 85–87, aspartate 104, tyrosine 131, aspartate 152, and glutamine 159 each bind S-adenosyl-L-methionine; that span reads GGH. Basic and acidic residues-rich tracts occupy residues 332-345 and 353-370; these read GAER…ERNP and RALE…RDAR. Positions 332 to 370 are disordered; that stretch reads GAERATPEEIERNPRSAPVRLRALEKVAGRPTTARRDAR.

The protein belongs to the methyltransferase superfamily. RsmH family.

The protein localises to the cytoplasm. It catalyses the reaction cytidine(1402) in 16S rRNA + S-adenosyl-L-methionine = N(4)-methylcytidine(1402) in 16S rRNA + S-adenosyl-L-homocysteine + H(+). Specifically methylates the N4 position of cytidine in position 1402 (C1402) of 16S rRNA. This chain is Ribosomal RNA small subunit methyltransferase H, found in Mycobacterium sp. (strain KMS).